Reading from the N-terminus, the 252-residue chain is GTP cyclohydrolase 1 type 2 homolog (252 aa).

A divalent metal cation contacts are provided by His-65, His-66, Asp-103, His-220, and Glu-224.

This sequence belongs to the GTP cyclohydrolase I type 2/NIF3 family. In terms of assembly, homohexamer.

This is GTP cyclohydrolase 1 type 2 homolog from Pseudomonas aeruginosa (strain ATCC 15692 / DSM 22644 / CIP 104116 / JCM 14847 / LMG 12228 / 1C / PRS 101 / PAO1).